A 419-amino-acid chain; its full sequence is Tyrosine--tRNA ligase (419 aa).

An L-tyrosine-binding site is contributed by Tyr34. The 'HIGH' region motif lies at 39 to 48 (PSGDSMHIGH). Positions 168 and 172 each coordinate L-tyrosine. Residues 230–234 (KFGKS) carry the 'KMSKS' region motif. Lys233 is an ATP binding site. Residues 352 to 418 (ANLVDWLVTL…GKKKYFLVSY (67 aa)) form the S4 RNA-binding domain.

The protein belongs to the class-I aminoacyl-tRNA synthetase family. TyrS type 1 subfamily. In terms of assembly, homodimer.

The protein resides in the cytoplasm. It carries out the reaction tRNA(Tyr) + L-tyrosine + ATP = L-tyrosyl-tRNA(Tyr) + AMP + diphosphate + H(+). In terms of biological role, catalyzes the attachment of tyrosine to tRNA(Tyr) in a two-step reaction: tyrosine is first activated by ATP to form Tyr-AMP and then transferred to the acceptor end of tRNA(Tyr). In Listeria monocytogenes serotype 4b (strain F2365), this protein is Tyrosine--tRNA ligase.